Here is an 84-residue protein sequence, read N- to C-terminus: U1-hexatoxin-Iw1a (84 aa).

A signal peptide spans 1-18 (MLKFVVVICLVIMAITFA). 5 disulfide bridges follow: C21–C32, C26–C40, C31–C66, C50–C74, and C68–C81.

This sequence belongs to the MIT-like AcTx family. As to expression, expressed by the venom gland.

The protein localises to the secreted. The protein is U1-hexatoxin-Iw1a of Illawarra wisharti (Illawarra funnel-web spider).